The following is an 810-amino-acid chain: Lon protease (810 aa).

Residues 40-233 (LIIVPVRGFV…MVAKLLAQRI (194 aa)) enclose the Lon N-terminal domain. 385–392 (GPPGVGKT) contributes to the ATP binding site. The 182-residue stretch at 621-802 (LSVPGVATGL…DDAMAAAFEG (182 aa)) folds into the Lon proteolytic domain. Active-site residues include S708 and K751.

It belongs to the peptidase S16 family. In terms of assembly, homohexamer. Organized in a ring with a central cavity.

It is found in the cytoplasm. It carries out the reaction Hydrolysis of proteins in presence of ATP.. In terms of biological role, ATP-dependent serine protease that mediates the selective degradation of mutant and abnormal proteins as well as certain short-lived regulatory proteins. Required for cellular homeostasis and for survival from DNA damage and developmental changes induced by stress. Degrades polypeptides processively to yield small peptide fragments that are 5 to 10 amino acids long. Binds to DNA in a double-stranded, site-specific manner. This chain is Lon protease, found in Methylocella silvestris (strain DSM 15510 / CIP 108128 / LMG 27833 / NCIMB 13906 / BL2).